A 106-amino-acid polypeptide reads, in one-letter code: MSMTSSVRVEWIAAVTIAAGTAAIGYLAYKRFYVKDHRNKSMVNPHIQKDNPKVVHAFDMEDLGDKAVYCRCWRSKKFPLCDGSHTKHNEETGDNVGPLIIKKKDT.

Ser-2 carries the N-acetylserine modification. The helical; Signal-anchor for type III membrane protein transmembrane segment at 10 to 29 threads the bilayer; the sequence is EWIAAVTIAAGTAAIGYLAY. The Cytoplasmic segment spans residues 30 to 106; the sequence is KRFYVKDHRN…GPLIIKKKDT (77 aa). Lys-40 participates in a covalent cross-link: Glycyl lysine isopeptide (Lys-Gly) (interchain with G-Cter in ubiquitin). The active-site Schiff-base intermediate with pyridoxal 5'-phosphate is Lys-53. Residues Lys-53 and Lys-66 each carry the N6-acetyllysine; alternate modification. Residues Lys-53 and Lys-66 each participate in a glycyl lysine isopeptide (Lys-Gly) (interchain with G-Cter in ubiquitin); alternate cross-link. 2 residues coordinate [2Fe-2S] cluster: Cys-70 and Cys-72. Residues Lys-76 and Lys-77 each participate in a glycyl lysine isopeptide (Lys-Gly) (interchain with G-Cter in ubiquitin) cross-link. 2 residues coordinate [2Fe-2S] cluster: Cys-81 and His-85. The tract at residues 84–106 is disordered; that stretch reads SHTKHNEETGDNVGPLIIKKKDT. Residue Lys-87 forms a Glycyl lysine isopeptide (Lys-Gly) (interchain with G-Cter in ubiquitin) linkage. An N6-acetyllysine; alternate modification is found at Lys-102. Lys-102 participates in a covalent cross-link: Glycyl lysine isopeptide (Lys-Gly) (interchain with G-Cter in ubiquitin); alternate. Glycyl lysine isopeptide (Lys-Gly) (interchain with G-Cter in ubiquitin) cross-links involve residues Lys-103 and Lys-104.

This sequence belongs to the CISD protein family. In terms of assembly, homodimer. The cofactor is [2Fe-2S] cluster. Pyridoxal 5'-phosphate serves as cofactor. Ubiquitinated by PRKN during mitophagy, leading to its degradation and enhancement of mitophagy. Deubiquitinated by USP30.

The protein localises to the mitochondrion outer membrane. It catalyses the reaction L-cysteine + 2-oxoglutarate = 2-oxo-3-sulfanylpropanoate + L-glutamate. Its function is as follows. L-cysteine transaminase that catalyzes the reversible transfer of the amino group from L-cysteine to the alpha-keto acid 2-oxoglutarate to respectively form 2-oxo-3-sulfanylpropanoate and L-glutamate. The catalytic cycle occurs in the presence of pyridoxal 5'-phosphate (PLP) cofactor that facilitates transamination by initially forming an internal aldimine with the epsilon-amino group of active site Lys-55 residue on the enzyme (PLP-enzyme aldimine), subsequently displaced by formation of an external aldimine with the substrate amino group (PLP-L-cysteine aldimine). The external aldimine is further deprotonated to form a carbanion intermediate, which in the presence of 2-oxoglutarate regenerates PLP yielding final products 2-oxo-3-sulfanylpropanoate and L-glutamate. The proton transfer in carbanion intermediate is suggested to be controlled by the active site lysine residue, whereas PLP stabilizes carbanion structure through electron delocalization, also known as the electron sink effect. Plays a key role in regulating maximal capacity for electron transport and oxidative phosphorylation. May be involved in iron-sulfur cluster shuttling and/or in redox reactions. Can transfer the [2Fe-2S] cluster to an apo-acceptor protein only when in the oxidation state, likely serving as a redox sensor that regulates mitochondrial iron-sulfur cluster assembly and iron trafficking upon oxidative stress. In Bos taurus (Bovine), this protein is CDGSH iron-sulfur domain-containing protein 1 (CISD1).